We begin with the raw amino-acid sequence, 490 residues long: Myocilin (490 aa).

An N-terminal signal peptide occupies residues 1-18 (MPATQLLLLACLVWGLGA). Asn-43 is a glycosylation site (N-linked (GlcNAc...) asparagine). Residues 52 to 169 (QAMSAIQDLQ…SQEVARLRRG (118 aa)) are a coiled coil. Residues 146–157 (REENEDLARRLD) are compositionally biased toward basic and acidic residues. The interval 146–188 (REENEDLARRLDSSSQEVARLRRGQCPQARGTPQDVPSGSREV) is disordered. The 260-residue stretch at 230 to 489 (GCGELVWVGE…MVTYDLRLSE (260 aa)) folds into the Olfactomedin-like domain. Cys-231 and Cys-419 are joined by a disulfide. Residues Asp-366, Asn-414, Ala-415, Val-463, and Asp-464 each contribute to the Ca(2+) site. Residues 488–490 (SEM) carry the Microbody targeting signal motif.

In terms of assembly, homodimer (via N-terminus). Can also form higher oligomers. Interacts with OLFM3, FN1, NRCAM, GLDN and NFASC. Interacts (via N-terminus) with MYL2. Interacts with SFRP1, FRZB, FZD7, FZD10, FZD1 and WIF1; regulates Wnt signaling. Interacts with SNTA1; regulates muscle hypertrophy. Interacts with ERBB2 and ERBB3; activates ERBB2-ERBB3 signaling pathway. Interacts with SNCG; affects its secretion and its aggregation. In terms of processing, palmitoylated. Post-translationally, undergoes a calcium-dependent proteolytic cleavage at Arg-212 by CAPN2 in the endoplasmic reticulum. The result is the production of two fragments, one of 35 kDa containing the C-terminal olfactomedin-like domain, and another of 20 kDa containing the N-terminal leucine zipper-like domain. Glycosylated. In terms of tissue distribution, expressed in optic nerve head, ciliary body and retina.

It localises to the secreted. The protein resides in the golgi apparatus. It is found in the cytoplasmic vesicle. Its subcellular location is the extracellular space. The protein localises to the extracellular matrix. It localises to the extracellular exosome. The protein resides in the mitochondrion. It is found in the mitochondrion intermembrane space. Its subcellular location is the mitochondrion inner membrane. The protein localises to the mitochondrion outer membrane. It localises to the rough endoplasmic reticulum. The protein resides in the cell projection. It is found in the cilium. Its subcellular location is the endoplasmic reticulum. Functionally, secreted glycoprotein regulating the activation of different signaling pathways in adjacent cells to control different processes including cell adhesion, cell-matrix adhesion, cytoskeleton organization and cell migration. Promotes substrate adhesion, spreading and formation of focal contacts. Negatively regulates cell-matrix adhesion and stress fiber assembly through Rho protein signal transduction. Modulates the organization of actin cytoskeleton by stimulating the formation of stress fibers through interactions with components of Wnt signaling pathways. Promotes cell migration through activation of PTK2 and the downstream phosphatidylinositol 3-kinase signaling. Plays a role in bone formation and promotes osteoblast differentiation in a dose-dependent manner through mitogen-activated protein kinase signaling. Mediates myelination in the peripheral nervous system through ERBB2/ERBB3 signaling. Plays a role as a regulator of muscle hypertrophy through the components of dystrophin-associated protein complex. Involved in positive regulation of mitochondrial depolarization. Plays a role in neurite outgrowth. May participate in the obstruction of fluid outflow in the trabecular meshwork. In Felis catus (Cat), this protein is Myocilin (MYOC).